We begin with the raw amino-acid sequence, 384 residues long: Beta-ureidopropionase (384 aa).

Residues 72–344 (VHVGLVQNRI…DGLLVAKLDL (273 aa)) enclose the CN hydrolase domain. Glutamate 119 (proton acceptor) is an active-site residue. Lysine 196 functions as the Proton donor in the catalytic mechanism. Catalysis depends on cysteine 233, which acts as the Nucleophile. Serine 378 is modified (phosphoserine).

This sequence belongs to the carbon-nitrogen hydrolase superfamily. BUP family. In terms of assembly, homodimer, homotetramer, homooctamer; can also form higher homooligomers. In terms of tissue distribution, detected in liver (at protein level).

The protein resides in the cytoplasm. It carries out the reaction 3-(carbamoylamino)propanoate + H2O + 2 H(+) = beta-alanine + NH4(+) + CO2. It catalyses the reaction 3-(carbamoylamino)-2-methylpropanoate + H2O + 2 H(+) = (R)-3-amino-2-methylpropanoate + NH4(+) + CO2. Its pathway is amino-acid biosynthesis; beta-alanine biosynthesis. With respect to regulation, strongly inhibited by 50 mM Zn(2+). Not inhibited by EDTA. Competitively inhibited by beta-alanine, 5-aminolevulinic acid (ALA), beta-aminoisobutyrate and 4-ureidobutyrate. Its function is as follows. Catalyzes a late step in pyrimidine degradation. Converts N-carbamoyl-beta-alanine (3-ureidopropanoate) into beta-alanine, ammonia and carbon dioxide. Likewise, converts N-carbamoyl-beta-aminoisobutyrate (3-ureidoisobutyrate) into beta-aminoisobutyrate, ammonia and carbon dioxide. This is Beta-ureidopropionase (UPB1) from Homo sapiens (Human).